A 254-amino-acid chain; its full sequence is UPF0246 protein CPE2152 (254 aa).

The protein belongs to the UPF0246 family.

This chain is UPF0246 protein CPE2152, found in Clostridium perfringens (strain 13 / Type A).